Reading from the N-terminus, the 98-residue chain is Large ribosomal subunit protein uL23 (98 aa).

The protein belongs to the universal ribosomal protein uL23 family. In terms of assembly, part of the 50S ribosomal subunit. Contacts protein L29, and trigger factor when it is bound to the ribosome.

In terms of biological role, one of the early assembly proteins it binds 23S rRNA. One of the proteins that surrounds the polypeptide exit tunnel on the outside of the ribosome. Forms the main docking site for trigger factor binding to the ribosome. The chain is Large ribosomal subunit protein uL23 from Methylobacterium sp. (strain 4-46).